Consider the following 1083-residue polypeptide: LIM and calponin homology domains-containing protein 1 (1083 aa).

Disordered regions lie at residues 1–22 (MASN…PPDT), 185–248 (SERS…VRKD), and 291–311 (REDY…ERPF). A Calponin-homology (CH) domain is found at 21 to 138 (DTACMEAQKW…TVYWLGKAAN (118 aa)). The segment covering 229–248 (RGSDSESDLPHRRIPDVRKD) has biased composition (basic and acidic residues). Positions 356 to 424 (LARWKTRRRS…HVAYKNAKTR (69 aa)) form a coiled coil. The span at 462–474 (PSLLSSSEDPNPL) shows a compositional bias: low complexity. Disordered stretches follow at residues 462–512 (PSLL…LISP), 625–661 (QKDE…VPAV), 698–725 (KEAK…ENES), and 759–779 (SPAL…DPEE). Composition is skewed to polar residues over residues 478 to 512 (RQQS…LISP) and 640 to 657 (SVEQ…TTQA). The span at 716–725 (ESSKIKENES) shows a compositional bias: basic and acidic residues. A coiled-coil region spans residues 784–835 (QEKWQQEQERLLQERYQKEQEKLKEEWEKAQKEVEEEERKYYEEERKIIEDT). A disordered region spans residues 987-1006 (KEETLNSSQSTSQCQSPNRS). Positions 991-1006 (LNSSQSTSQCQSPNRS) are enriched in polar residues. The region spanning 1011 to 1077 (KLCSTCGLPL…NDCYVKSRTA (67 aa)) is the LIM zinc-binding domain.

This sequence belongs to the LIMCH1 family.

It is found in the cytoplasm. It localises to the cytoskeleton. The protein localises to the stress fiber. Functionally, actin stress fibers-associated protein that activates non-muscle myosin IIa. Through the activation of non-muscle myosin IIa, positively regulates actin stress fibers assembly and stabilizes focal adhesions. It therefore negatively regulates cell spreading and cell migration. This is LIM and calponin homology domains-containing protein 1 (limch1) from Xenopus laevis (African clawed frog).